Reading from the N-terminus, the 128-residue chain is Large ribosomal subunit protein uL22 (128 aa).

The protein belongs to the universal ribosomal protein uL22 family. In terms of assembly, part of the 50S ribosomal subunit.

Functionally, this protein binds specifically to 23S rRNA; its binding is stimulated by other ribosomal proteins, e.g. L4, L17, and L20. It is important during the early stages of 50S assembly. It makes multiple contacts with different domains of the 23S rRNA in the assembled 50S subunit and ribosome. Its function is as follows. The globular domain of the protein is located near the polypeptide exit tunnel on the outside of the subunit, while an extended beta-hairpin is found that lines the wall of the exit tunnel in the center of the 70S ribosome. This chain is Large ribosomal subunit protein uL22, found in Methylobacterium radiotolerans (strain ATCC 27329 / DSM 1819 / JCM 2831 / NBRC 15690 / NCIMB 10815 / 0-1).